The primary structure comprises 159 residues: tRNA-specific adenosine deaminase (159 aa).

The CMP/dCMP-type deaminase domain occupies E6–E133. H57 is a binding site for Zn(2+). The active-site Proton donor is the E59. Positions 87 and 90 each coordinate Zn(2+).

It belongs to the cytidine and deoxycytidylate deaminase family. Homodimer. Requires Zn(2+) as cofactor.

The enzyme catalyses adenosine(34) in tRNA + H2O + H(+) = inosine(34) in tRNA + NH4(+). Catalyzes the deamination of adenosine to inosine at the wobble position 34 of tRNA(Arg2). The chain is tRNA-specific adenosine deaminase from Streptococcus pyogenes serotype M18 (strain MGAS8232).